A 116-amino-acid polypeptide reads, in one-letter code: Methionine-R-sulfoxide reductase B1 (116 aa).

The 106-residue stretch at 1 to 106 folds into the MsrB domain; that stretch reads MSFCSFFGGE…FSSSLKFVPK (106 aa). The Zn(2+) site is built by Cys-23, Cys-26, Cys-71, and Cys-74. The active-site Nucleophile is Sec-95. Residue Sec-95 is a non-standard amino acid, selenocysteine.

This sequence belongs to the MsrB Met sulfoxide reductase family. Zn(2+) serves as cofactor. In terms of processing, truncated MSRB1/SEPX1 proteins produced by failed UGA/Sec decoding are ubiquitinated by some Cul2-RING E3 ubiquitin-protein ligase complexes (containing either PRAME, PRAMF6, PRAMF9 or FEM1C as substrate-recognition component).

It is found in the cytoplasm. The protein localises to the nucleus. It localises to the cytoskeleton. It catalyses the reaction L-methionyl-[protein] + [thioredoxin]-disulfide + H2O = L-methionyl-(R)-S-oxide-[protein] + [thioredoxin]-dithiol. It carries out the reaction [thioredoxin]-disulfide + L-methionine + H2O = L-methionine (R)-S-oxide + [thioredoxin]-dithiol. Functionally, methionine-sulfoxide reductase that specifically reduces methionine (R)-sulfoxide back to methionine. While in many cases, methionine oxidation is the result of random oxidation following oxidative stress, methionine oxidation is also a post-translational modification that takes place on specific residue. Acts as a regulator of actin assembly by reducing methionine (R)-sulfoxide mediated by MICALs (MICAL1, MICAL2 or MICAL3) on actin, thereby promoting filament repolymerization. Plays a role in innate immunity by reducing oxidized actin, leading to actin repolymerization in macrophages. The polypeptide is Methionine-R-sulfoxide reductase B1 (MSRB1) (Homo sapiens (Human)).